The chain runs to 516 residues: L-amino acid oxidase Lm29 (516 aa).

The signal sequence occupies residues Met-1–Cys-18. Residues Cys-28 and Cys-191 are joined by a disulfide bond. FAD-binding positions include Met-61–Ser-62, Glu-81–Ala-82, Arg-89, and Gly-105–Arg-108. Arg-108 serves as a coordination point for substrate. N-linked (GlcNAc...) asparagine glycosylation is present at Asn-190. His-241 is a binding site for substrate. Val-279 is a binding site for FAD. Cys-349 and Cys-430 are oxidised to a cystine. Residue Asn-379 is glycosylated (N-linked (GlcNAc...) asparagine). Residue Tyr-390 coordinates substrate. FAD-binding positions include Glu-475 and Gly-482 to Thr-487. Gly-482 to Trp-483 lines the substrate pocket.

It belongs to the flavin monoamine oxidase family. FIG1 subfamily. In terms of assembly, homodimer; non-covalently linked. Requires FAD as cofactor. As to expression, expressed by the venom gland.

The protein localises to the secreted. The catalysed reaction is an L-alpha-amino acid + O2 + H2O = a 2-oxocarboxylate + H2O2 + NH4(+). The enzyme catalyses L-leucine + O2 + H2O = 4-methyl-2-oxopentanoate + H2O2 + NH4(+). It catalyses the reaction L-phenylalanine + O2 + H2O = 3-phenylpyruvate + H2O2 + NH4(+). It carries out the reaction L-tryptophan + O2 + H2O = indole-3-pyruvate + H2O2 + NH4(+). The catalysed reaction is L-methionine + O2 + H2O = 4-methylsulfanyl-2-oxobutanoate + H2O2 + NH4(+). The enzyme catalyses L-isoleucine + O2 + H2O = (S)-3-methyl-2-oxopentanoate + H2O2 + NH4(+). It catalyses the reaction L-tyrosine + O2 + H2O = 3-(4-hydroxyphenyl)pyruvate + H2O2 + NH4(+). Functionally, catalyzes an oxidative deamination of predominantly hydrophobic and aromatic L-amino acids, thus producing hydrogen peroxide that may contribute to the diverse toxic effects of this enzyme. Is highly active on L-Met=L-Leu&gt;&gt;L-Phe&gt;L-Trp&gt;L-Tyr&gt;L-Ile, and weakly or not active on L-His, L-Arg, L-Val, L-Gln, L-Thr, L-Lys, and L-Ser. Exhibits a low myotoxicity (a mild myonecrosis is observed after injection in mice quadriceps muscle). In vitro, is cytotoxic to a lot of human cell lines, including AGS (IC(50)=22.7 ug/ml), MCF-7 (IC(50)=1.4 ug/ml), HL-60, HeLa and Jurkat cells, as well as to the parasite Leishmania brasiliensis (IC(50)=2.22 ug/ml). This cytotoxicity is dependent on the production of hydrogen peroxyde, since it is inhibited by catalase, a hydrogen peroxyde scavenger. The sequence is that of L-amino acid oxidase Lm29 from Lachesis muta (South American bushmaster).